The chain runs to 454 residues: tRNA modification GTPase MnmE (454 aa).

(6S)-5-formyl-5,6,7,8-tetrahydrofolate-binding residues include arginine 23, glutamate 80, and lysine 120. Residues 216–377 form the TrmE-type G domain; sequence GMKVVIAGRP…LRNHLKQSMG (162 aa). Asparagine 226 lines the K(+) pocket. Residues 226–231, 245–251, 270–273, 335–338, and 358–360 contribute to the GTP site; these read NAGKSS, TDIAGTT, DTAG, NKAD, and SAR. Position 230 (serine 230) interacts with Mg(2+). Positions 245, 247, and 250 each coordinate K(+). Threonine 251 is a binding site for Mg(2+). Residue lysine 454 participates in (6S)-5-formyl-5,6,7,8-tetrahydrofolate binding.

It belongs to the TRAFAC class TrmE-Era-EngA-EngB-Septin-like GTPase superfamily. TrmE GTPase family. Homodimer. Heterotetramer of two MnmE and two MnmG subunits. Requires K(+) as cofactor.

It is found in the cytoplasm. Its function is as follows. Exhibits a very high intrinsic GTPase hydrolysis rate. Involved in the addition of a carboxymethylaminomethyl (cmnm) group at the wobble position (U34) of certain tRNAs, forming tRNA-cmnm(5)s(2)U34. The chain is tRNA modification GTPase MnmE from Klebsiella pneumoniae (strain 342).